Here is a 213-residue protein sequence, read N- to C-terminus: Orotate phosphoribosyltransferase (213 aa).

Position 26 (lysine 26) interacts with 5-phospho-alpha-D-ribose 1-diphosphate. 34–35 (FF) contributes to the orotate binding site. 5-phospho-alpha-D-ribose 1-diphosphate-binding positions include 72–73 (YK), arginine 99, lysine 100, lysine 103, histidine 105, and 124–132 (DDVITAGTA). Orotate-binding residues include threonine 128 and arginine 156.

This sequence belongs to the purine/pyrimidine phosphoribosyltransferase family. PyrE subfamily. As to quaternary structure, homodimer. It depends on Mg(2+) as a cofactor.

The catalysed reaction is orotidine 5'-phosphate + diphosphate = orotate + 5-phospho-alpha-D-ribose 1-diphosphate. It functions in the pathway pyrimidine metabolism; UMP biosynthesis via de novo pathway; UMP from orotate: step 1/2. Its function is as follows. Catalyzes the transfer of a ribosyl phosphate group from 5-phosphoribose 1-diphosphate to orotate, leading to the formation of orotidine monophosphate (OMP). The chain is Orotate phosphoribosyltransferase from Vibrio vulnificus (strain CMCP6).